Here is a 348-residue protein sequence, read N- to C-terminus: Phenylalanine--tRNA ligase alpha subunit (348 aa).

A Mg(2+)-binding site is contributed by Glu259.

Belongs to the class-II aminoacyl-tRNA synthetase family. Phe-tRNA synthetase alpha subunit type 1 subfamily. Tetramer of two alpha and two beta subunits. Requires Mg(2+) as cofactor.

Its subcellular location is the cytoplasm. It carries out the reaction tRNA(Phe) + L-phenylalanine + ATP = L-phenylalanyl-tRNA(Phe) + AMP + diphosphate + H(+). The polypeptide is Phenylalanine--tRNA ligase alpha subunit (Levilactobacillus brevis (strain ATCC 367 / BCRC 12310 / CIP 105137 / JCM 1170 / LMG 11437 / NCIMB 947 / NCTC 947) (Lactobacillus brevis)).